Reading from the N-terminus, the 505-residue chain is 2-methylcitrate dehydratase (505 aa).

The protein belongs to the PrpD family. As to quaternary structure, monomer.

The catalysed reaction is (2S,3S)-2-methylcitrate = 2-methyl-cis-aconitate + H2O. It carries out the reaction citrate = D-threo-isocitrate. Its pathway is organic acid metabolism; propanoate degradation. It functions in the pathway carbohydrate metabolism; tricarboxylic acid cycle; isocitrate from oxaloacetate: step 1/2. Its function is as follows. Involved in the catabolism of short chain fatty acids (SCFA) via the tricarboxylic acid (TCA)(acetyl degradation route) and via the 2-methylcitrate cycle I (propionate degradation route). Catalyzes the dehydration of 2-methylcitrate (2-MC) to yield the cis isomer of 2-methyl-aconitate. Could also catalyze the dehydration of citrate and the hydration of cis-aconitate. The polypeptide is 2-methylcitrate dehydratase (Mycobacterium tuberculosis (strain ATCC 35801 / TMC 107 / Erdman)).